A 199-amino-acid chain; its full sequence is Small ribosomal subunit protein eS1 (199 aa).

This sequence belongs to the eukaryotic ribosomal protein eS1 family.

The polypeptide is Small ribosomal subunit protein eS1 (Pyrococcus horikoshii (strain ATCC 700860 / DSM 12428 / JCM 9974 / NBRC 100139 / OT-3)).